The sequence spans 129 residues: Small ribosomal subunit protein bS6 (129 aa).

Positions 110-121 (FVRRDDERREDT) are enriched in basic and acidic residues. Positions 110-129 (FVRRDDERREDTVEAASSEE) are disordered.

Belongs to the bacterial ribosomal protein bS6 family.

Its function is as follows. Binds together with bS18 to 16S ribosomal RNA. The polypeptide is Small ribosomal subunit protein bS6 (Aeromonas salmonicida (strain A449)).